The primary structure comprises 470 residues: NADH-quinone oxidoreductase subunit D (470 aa).

A compositionally biased stretch (low complexity) spans 1–18 (MTPSTSTPHTSTAPHTST). The segment at 1–37 (MTPSTSTPHTSTAPHTSTGQSTDGAAQPGDGSSAYEA) is disordered.

It belongs to the complex I 49 kDa subunit family. In terms of assembly, NDH-1 is composed of 14 different subunits. Subunits NuoB, C, D, E, F, and G constitute the peripheral sector of the complex.

The protein localises to the cell membrane. It carries out the reaction a quinone + NADH + 5 H(+)(in) = a quinol + NAD(+) + 4 H(+)(out). NDH-1 shuttles electrons from NADH, via FMN and iron-sulfur (Fe-S) centers, to quinones in the respiratory chain. The immediate electron acceptor for the enzyme in this species is believed to be a menaquinone. Couples the redox reaction to proton translocation (for every two electrons transferred, four hydrogen ions are translocated across the cytoplasmic membrane), and thus conserves the redox energy in a proton gradient. In Frankia alni (strain DSM 45986 / CECT 9034 / ACN14a), this protein is NADH-quinone oxidoreductase subunit D.